Consider the following 543-residue polypeptide: MGCIKSKENKSPAIKYRPENTPEPVSTSVSHYGAEPTTVSPCPSSSAKGTAVNFSSLSMTPFGGSSGVTPFGGASSSFSVVPSSYPAGLTGGVTIFVALYDYEARTTEDLSFKKGERFQIINNTEGDWWEARSIATGKNGYIPSNYVAPADSIQAEEWYFGKMGRKDAERLLLNPGNQRGIFLVRESETTKGAYSLSIRDWDEIRGDNVKHYKIRKLDNGGYYITTRAQFDTLQKLVKHYTEHADGLCHKLTTVCPTVKPQTQGLAKDAWEIPRESLRLEVKLGQGCFGEVWMGTWNGTTKVAIKTLKPGTMMPEAFLQEAQIMKKLRHDKLVPLYAVVSEEPIYIVTEFMSKGSLLDFLKEGDGKYLKLPQLVDMAAQIADGMAYIERMNYIHRDLRAANILVGENLVCKIADFGLARLIEDNEYTARQGAKFPIKWTAPEAALYGRFTIKSDVWSFGILQTELVTKGRVPYPGMVNREVLEQVERGYRMPCPQGCPESLHELMNLCWKKDPDERPTFEYIQSFLEDYFTATEPQYQPGENL.

Positions 1 to 20 (MGCIKSKENKSPAIKYRPEN) are enriched in basic and acidic residues. The tract at residues 1–45 (MGCIKSKENKSPAIKYRPENTPEPVSTSVSHYGAEPTTVSPCPSS) is disordered. A lipid anchor (N-myristoyl glycine) is attached at G2. Residue C3 is the site of S-palmitoyl cysteine; in membrane form attachment. T21 carries the phosphothreonine modification. Y32 carries the post-translational modification Phosphotyrosine. The residue at position 40 (S40) is a Phosphoserine. One can recognise an SH3 domain in the interval 91 to 152 (GGVTIFVALY…PSNYVAPADS (62 aa)). In terms of domain architecture, SH2 spans 158–255 (WYFGKMGRKD…GLCHKLTTVC (98 aa)). The 254-residue stretch at 277–530 (LRLEVKLGQG…YIQSFLEDYF (254 aa)) folds into the Protein kinase domain. Residues 283–291 (LGQGCFGEV) and K305 each bind ATP. 2 positions are modified to phosphotyrosine: Y336 and Y345. The active-site Proton acceptor is the D396. Residue Y426 is modified to Phosphotyrosine; by autocatalysis. Y446 is modified (phosphotyrosine). The residue at position 537 (Y537) is a Phosphotyrosine; by CSK.

It belongs to the protein kinase superfamily. Tyr protein kinase family. SRC subfamily. In terms of assembly, interacts with YAP1 and CSF1R. Interacts with CTNND1; this interaction allows YES1-mediated activation of FYN and FER and subsequent phosphorylation of CTNND1. Interacts with FASLG. Interacts with IL6ST/gp130. Interacts with SCRIB, when YES1 is in a closed conformation; the interaction facilitates YES1 autophosphorylation. In terms of processing, phosphorylated. Phosphorylation by CSK on the C-terminal tail maintains the enzyme in an inactive state. Autophosphorylation at Tyr-426 maintains enzyme activity by blocking CSK-mediated inhibition. Palmitoylation at Cys-3 promotes membrane localization. In terms of tissue distribution, expressed in the epithelial cells of renal proximal tubules and stomach as well as hematopoietic cells in the bone marrow and spleen in the fetal tissues. In adult, expressed in epithelial cells of the renal proximal tubules and present in keratinocytes in the basal epidermal layer of epidermis.

It is found in the cell membrane. It localises to the cytoplasm. Its subcellular location is the cytoskeleton. The protein resides in the microtubule organizing center. The protein localises to the centrosome. It is found in the cytosol. It localises to the cell junction. It catalyses the reaction L-tyrosyl-[protein] + ATP = O-phospho-L-tyrosyl-[protein] + ADP + H(+). Functionally, non-receptor protein tyrosine kinase that is involved in the regulation of cell growth and survival, apoptosis, cell-cell adhesion, cytoskeleton remodeling, and differentiation. Stimulation by receptor tyrosine kinases (RTKs) including EGFR, PDGFR, CSF1R and FGFR leads to recruitment of YES1 to the phosphorylated receptor, and activation and phosphorylation of downstream substrates. Upon EGFR activation, promotes the phosphorylation of PARD3 to favor epithelial tight junction assembly. Participates in the phosphorylation of specific junctional components such as CTNND1 by stimulating the FYN and FER tyrosine kinases at cell-cell contacts. Upon T-cell stimulation by CXCL12, phosphorylates collapsin response mediator protein 2/DPYSL2 and induces T-cell migration. Participates in CD95L/FASLG signaling pathway and mediates AKT-mediated cell migration. Plays a role in cell cycle progression by phosphorylating the cyclin-dependent kinase 4/CDK4 thus regulating the G1 phase. Also involved in G2/M progression and cytokinesis. Catalyzes phosphorylation of organic cation transporter OCT2 which induces its transport activity. This chain is Tyrosine-protein kinase Yes (YES1), found in Homo sapiens (Human).